The chain runs to 220 residues: Cytidylate kinase (220 aa).

An ATP-binding site is contributed by 10-18; it reads GPASSGKST.

Belongs to the cytidylate kinase family. Type 1 subfamily.

Its subcellular location is the cytoplasm. It carries out the reaction CMP + ATP = CDP + ADP. It catalyses the reaction dCMP + ATP = dCDP + ADP. This Lactococcus lactis subsp. lactis (strain IL1403) (Streptococcus lactis) protein is Cytidylate kinase.